The chain runs to 209 residues: Glutathione S-transferase 1-1 (209 aa).

A GST N-terminal domain is found at 1 to 81; the sequence is MADFYYLPGS…YLVEKYGKTD (81 aa). Residues S10, 51–53, and 65–67 each bind glutathione; these read HTI and ESR. The GST C-terminal domain maps to 87 to 209; that stretch reads CPKKRAVINQ…GCLEFKKFFE (123 aa).

The protein belongs to the GST superfamily. Theta family. In terms of assembly, homodimer.

The catalysed reaction is RX + glutathione = an S-substituted glutathione + a halide anion + H(+). The enzyme catalyses 1,1,1-trichloro-2,2-bis(4-chlorophenyl)ethane = 1,1-dichloro-2,2-bis(4-chlorophenyl)ethylene + chloride + H(+). Its function is as follows. Conjugation of reduced glutathione to a wide number of exogenous and endogenous hydrophobic electrophiles. Has DDT dehydrochlorinase activity. This is Glutathione S-transferase 1-1 (GstD1) from Drosophila sechellia (Fruit fly).